Consider the following 359-residue polypeptide: MIKIYTEIERGQNWLQRHQKCCPIFALVLGFTETGLIPGISTAGATPEDRKYTAIADAEFIVKGVSPHPRYPLPPLTVGASPAYITRAVVEKLAIPVLVFNAGLPLPPAVDYIELGGQPARCLSTGRALDLTIVKHLFAQGLTWGEKLARQSSYLIIGECVVGGTTTALAILTGLGYRANGKVNSSHPQCNHAQKQSIVEQGLARKEIFDPFEVIAALGDPQQIFVAGMAIAASGQGGVLLAGGTQMLAVSALIQALVAKYAYPVNWENIIVGTTRWVAEDKTGDTVGLARMIGKLPLLATQLDFSASKYPVLQAYQQGFVKEGVGAGGCAIAACLYRNWTNQDLVKAIENLIGFQLNC.

It belongs to the UPF0284 family.

The protein is UPF0284 protein MAE_56900 of Microcystis aeruginosa (strain NIES-843 / IAM M-2473).